We begin with the raw amino-acid sequence, 212 residues long: GTP cyclohydrolase 1 (212 aa).

Residues C103, H106, and C174 each contribute to the Zn(2+) site.

Belongs to the GTP cyclohydrolase I family. In terms of assembly, toroid-shaped homodecamer, composed of two pentamers of five dimers.

It carries out the reaction GTP + H2O = 7,8-dihydroneopterin 3'-triphosphate + formate + H(+). It functions in the pathway cofactor biosynthesis; 7,8-dihydroneopterin triphosphate biosynthesis; 7,8-dihydroneopterin triphosphate from GTP: step 1/1. The sequence is that of GTP cyclohydrolase 1 from Caulobacter vibrioides (strain ATCC 19089 / CIP 103742 / CB 15) (Caulobacter crescentus).